Here is a 232-residue protein sequence, read N- to C-terminus: 2,3,4,5-tetrahydropyridine-2,6-dicarboxylate N-acetyltransferase (232 aa).

Belongs to the transferase hexapeptide repeat family. DapH subfamily.

It catalyses the reaction (S)-2,3,4,5-tetrahydrodipicolinate + acetyl-CoA + H2O = L-2-acetamido-6-oxoheptanedioate + CoA. It participates in amino-acid biosynthesis; L-lysine biosynthesis via DAP pathway; LL-2,6-diaminopimelate from (S)-tetrahydrodipicolinate (acetylase route): step 1/3. In terms of biological role, catalyzes the transfer of an acetyl group from acetyl-CoA to tetrahydrodipicolinate. This chain is 2,3,4,5-tetrahydropyridine-2,6-dicarboxylate N-acetyltransferase, found in Streptococcus pneumoniae serotype 2 (strain D39 / NCTC 7466).